Here is a 139-residue protein sequence, read N- to C-terminus: uncharacterized protein (139 aa).

This is an uncharacterized protein from Sinorhizobium fredii (strain NBRC 101917 / NGR234).